A 502-amino-acid chain; its full sequence is Glycerol kinase (502 aa).

Threonine 16 lines the ADP pocket. ATP is bound by residues threonine 16, threonine 17, and serine 18. Sn-glycerol 3-phosphate is bound at residue threonine 16. Arginine 20 contributes to the ADP binding site. 4 residues coordinate sn-glycerol 3-phosphate: arginine 86, glutamate 87, tyrosine 138, and aspartate 247. Glycerol is bound by residues arginine 86, glutamate 87, tyrosine 138, aspartate 247, and glutamine 248. Threonine 269 and glycine 312 together coordinate ADP. Residues threonine 269, glycine 312, glutamine 316, and glycine 413 each contribute to the ATP site. Positions 413 and 417 each coordinate ADP.

The protein belongs to the FGGY kinase family.

It carries out the reaction glycerol + ATP = sn-glycerol 3-phosphate + ADP + H(+). Its pathway is polyol metabolism; glycerol degradation via glycerol kinase pathway; sn-glycerol 3-phosphate from glycerol: step 1/1. Inhibited by fructose 1,6-bisphosphate (FBP). Key enzyme in the regulation of glycerol uptake and metabolism. Catalyzes the phosphorylation of glycerol to yield sn-glycerol 3-phosphate. This Dechloromonas aromatica (strain RCB) protein is Glycerol kinase.